The chain runs to 580 residues: Phosphatase and actin regulator 1 (580 aa).

2 positions are modified to phosphoserine: Ser-67 and Ser-78. The residue at position 104 (Thr-104) is a Phosphothreonine. The short motif at 108-129 (RRRSKFANLGRIFKPWKWRKKK) is the Nuclear localization signal element. The stretch at 138-163 (AALERKISMRQSREELIKRGVLKEIY) is one RPEL 1 repeat. Disordered stretches follow at residues 331–355 (EQRV…TKAG) and 376–410 (KENV…SSLY). Residues 335-345 (PCSTSYHSSGL) are compositionally biased toward polar residues. The span at 395–407 (EEEEEEEDEDDDS) shows a compositional bias: acidic residues. RPEL repeat units follow at residues 422–447 (DSLA…PRQT), 460–484 (TKLT…LKPR), and 498–523 (RRLT…IRFS). The segment at 462–494 (LTRRLSQRPTAEELEQRNILKPRNEQEEQEEKR) is disordered. Position 467 is a phosphoserine (Ser-467). Basic and acidic residues predominate over residues 471–494 (TAEELEQRNILKPRNEQEEQEEKR). Ser-505 carries the post-translational modification Phosphoserine.

This sequence belongs to the phosphatase and actin regulator family. As to quaternary structure, interacts (via RPEL repeats) with ACTA1 and PPP1CA; ACTA1 and PPP1CA compete for the same binding site. As to expression, detected in umbilical vein endothelial cells.

It is found in the cytoplasm. The protein resides in the synapse. The protein localises to the nucleus. Its function is as follows. Binds actin monomers (G actin) and plays a role in multiple processes including the regulation of actin cytoskeleton dynamics, actin stress fibers formation, cell motility and survival, formation of tubules by endothelial cells, and regulation of PPP1CA activity. Involved in the regulation of cortical neuron migration and dendrite arborization. The protein is Phosphatase and actin regulator 1 (PHACTR1) of Homo sapiens (Human).